The following is a 285-amino-acid chain: 2,3,4,5-tetrahydropyridine-2,6-dicarboxylate N-succinyltransferase (285 aa).

Positions 111 and 148 each coordinate substrate.

It belongs to the transferase hexapeptide repeat family. As to quaternary structure, homotrimer.

The protein resides in the cytoplasm. The enzyme catalyses (S)-2,3,4,5-tetrahydrodipicolinate + succinyl-CoA + H2O = (S)-2-succinylamino-6-oxoheptanedioate + CoA. It functions in the pathway amino-acid biosynthesis; L-lysine biosynthesis via DAP pathway; LL-2,6-diaminopimelate from (S)-tetrahydrodipicolinate (succinylase route): step 1/3. In Rhizobium meliloti (strain 1021) (Ensifer meliloti), this protein is 2,3,4,5-tetrahydropyridine-2,6-dicarboxylate N-succinyltransferase.